The chain runs to 426 residues: PHD finger-containing protein 6 (426 aa).

A PHD-type zinc finger spans residues 9 to 59 (RSICETCGHQGWKNSLVTCSKCRIACEHCYCMRESSFETSIHFVCADCSMR). The Zn(2+) site is built by cysteine 12, cysteine 15, cysteine 27, cysteine 30, histidine 36, cysteine 39, cysteine 53, and cysteine 56. Disordered regions lie at residues 122–144 (TFRV…TAGF) and 185–205 (RQAS…GDGA).

In terms of assembly, interacts directly with AIPP3/BDT1.

Its function is as follows. Together with AIPP3/BDT1, cooperates to form a BAH-PHD bivalent histone reader complex able to read histone H3 lysine 27 trimethylation (H3K27me3) histone marks in order to regulate transcription, especially to prevent early flowering; promotes AIPP3/BDT1 binding to H3K27me3. The protein is PHD finger-containing protein 6 of Arabidopsis thaliana (Mouse-ear cress).